The chain runs to 483 residues: Nuc-1 negative regulatory protein preg (483 aa).

Low complexity-rich tracts occupy residues 1–32 (MLTR…PRPS), 60–80 (SSRR…PISI), and 176–200 (ASAL…AVAV). Disordered regions lie at residues 1-112 (MLTR…SRPQ), 164-234 (NTVG…SQGD), and 434-483 (CPEP…RHAT). Acidic residues predominate over residues 435–473 (PEPEEADDEDEDEELDESDAIGDDDDDIDGEGGEREEET).

Belongs to the cyclin family.

Negative regulator, together with pgov, of the transcriptional activator nuc-1, which controls the expression of phosphorous acquisition enzymes. In Neurospora crassa (strain ATCC 24698 / 74-OR23-1A / CBS 708.71 / DSM 1257 / FGSC 987), this protein is Nuc-1 negative regulatory protein preg (preg).